The primary structure comprises 393 residues: Stearoyl-[acyl-carrier-protein] 9-desaturase, chloroplastic (393 aa).

The transit peptide at 1 to 30 (MALNINGVSLKSHKMLPFPCSSARSERVFM) directs the protein to the chloroplast. Fe cation is bound by residues Glu-135, Glu-173, His-176, Glu-259, and His-262.

Belongs to the fatty acid desaturase type 2 family. In terms of assembly, homodimer. The cofactor is Fe(2+).

Its subcellular location is the plastid. It is found in the chloroplast. The enzyme catalyses octadecanoyl-[ACP] + 2 reduced [2Fe-2S]-[ferredoxin] + O2 + 2 H(+) = (9Z)-octadecenoyl-[ACP] + 2 oxidized [2Fe-2S]-[ferredoxin] + 2 H2O. The protein operates within lipid metabolism; fatty acid metabolism. Converts stearoyl-ACP to oleoyl-ACP by introduction of a cis double bond between carbons 9 and 10 of the acyl chain. This is Stearoyl-[acyl-carrier-protein] 9-desaturase, chloroplastic from Solanum tuberosum (Potato).